The primary structure comprises 377 residues: Probable multidrug ABC transporter permease YbhS (377 aa).

Residues 1–28 lie on the Cytoplasmic side of the membrane; the sequence is MSNPILSWRRVRALCVKETRQIVRDPSS. The helical transmembrane segment at 29–49 threads the bilayer; that stretch reads WLIAVVIPLLLLFIFGYGINL. At 50 to 181 the chain is on the periplasmic side; it reads DSSKLRVGIL…WFNPAAISQH (132 aa). Positions 145-375 constitute an ABC transmembrane type-2 domain; that stretch reads IWQIWQMQRA…GLTWLKTKRR (231 aa). A helical transmembrane segment spans residues 182 to 202; sequence FIIPGAVTIIMTVIGAILTSL. The Cytoplasmic portion of the chain corresponds to 203-234; that stretch reads VVAREWERGTMEALLSTEITRTELLLCKLIPY. The helical transmembrane segment at 235–255 threads the bilayer; sequence YFLGMLAMLLCMLVSVFILGV. Residues 256-261 are Periplasmic-facing; sequence PYRGSL. The helical transmembrane segment at 262–282 threads the bilayer; the sequence is LILFFISSLFLLSTLGMGLLI. The Cytoplasmic segment spans residues 283–291; sequence STITRNQFN. The chain crosses the membrane as a helical span at residues 292 to 312; that stretch reads AAQVALNAAFLPSIMLSGFIF. Residues 313 to 345 lie on the Periplasmic side of the membrane; sequence QIDSMPAVIRAVTYIIPARYFVSTLQSLFLAGN. The chain crosses the membrane as a helical span at residues 346 to 366; it reads IPVVLVVNVLFLIASAVMFIG. Residues 367 to 377 are Cytoplasmic-facing; the sequence is LTWLKTKRRLD.

It belongs to the ABC-2 integral membrane protein family. In terms of assembly, the complex is probably composed of two ATP-binding proteins (YbhF) and two transmembrane proteins (YbhR and YbhS).

The protein resides in the cell inner membrane. In terms of biological role, part of the ABC transporter complex YbhFSR that could be involved in efflux of cefoperazone. Probably involved in the translocation of the substrate across the membrane. This is Probable multidrug ABC transporter permease YbhS (ybhS) from Escherichia coli O157:H7.